The sequence spans 208 residues: Outer-membrane lipoprotein carrier protein (208 aa).

A signal peptide spans 1–25; the sequence is MKKLFSAKLFSALVLSFSLFSTAHA.

The protein belongs to the LolA family. As to quaternary structure, monomer.

Its subcellular location is the periplasm. In terms of biological role, participates in the translocation of lipoproteins from the inner membrane to the outer membrane. Only forms a complex with a lipoprotein if the residue after the N-terminal Cys is not an aspartate (The Asp acts as a targeting signal to indicate that the lipoprotein should stay in the inner membrane). The polypeptide is Outer-membrane lipoprotein carrier protein (Vibrio campbellii (strain ATCC BAA-1116)).